The primary structure comprises 93 residues: Small ribosomal subunit protein uS19 (93 aa).

This sequence belongs to the universal ribosomal protein uS19 family.

Protein S19 forms a complex with S13 that binds strongly to the 16S ribosomal RNA. This is Small ribosomal subunit protein uS19 from Thermoanaerobacter pseudethanolicus (strain ATCC 33223 / 39E) (Clostridium thermohydrosulfuricum).